The sequence spans 304 residues: Elongation factor Ts (304 aa).

Residues 82 to 85 form an involved in Mg(2+) ion dislocation from EF-Tu region; it reads TDFV.

It belongs to the EF-Ts family.

It is found in the cytoplasm. Its function is as follows. Associates with the EF-Tu.GDP complex and induces the exchange of GDP to GTP. It remains bound to the aminoacyl-tRNA.EF-Tu.GTP complex up to the GTP hydrolysis stage on the ribosome. The protein is Elongation factor Ts of Symbiobacterium thermophilum (strain DSM 24528 / JCM 14929 / IAM 14863 / T).